The following is a 293-amino-acid chain: Glutamyl-Q tRNA(Asp) synthetase (293 aa).

Residues 9 to 13 (RFAPS) and glutamate 45 each bind L-glutamate. The 'HIGH' region motif lies at 12–22 (PSPSGELHFGS). Zn(2+) contacts are provided by cysteine 101, cysteine 103, tyrosine 115, and cysteine 119. Residues tyrosine 172 and arginine 190 each coordinate L-glutamate. The short motif at 228–232 (KLSKQ) is the 'KMSKS' region element. ATP is bound at residue lysine 231.

The protein belongs to the class-I aminoacyl-tRNA synthetase family. GluQ subfamily. The cofactor is Zn(2+).

Functionally, catalyzes the tRNA-independent activation of glutamate in presence of ATP and the subsequent transfer of glutamate onto a tRNA(Asp). Glutamate is transferred on the 2-amino-5-(4,5-dihydroxy-2-cyclopenten-1-yl) moiety of the queuosine in the wobble position of the QUC anticodon. The polypeptide is Glutamyl-Q tRNA(Asp) synthetase (Klebsiella pneumoniae (strain 342)).